The sequence spans 266 residues: Type III pantothenate kinase (266 aa).

15–22 is a binding site for ATP; the sequence is EIGNSSTS. Substrate is bound by residues Tyr105 and 112-115; that span reads GADR. Catalysis depends on Asp114, which acts as the Proton acceptor. Asp135 serves as a coordination point for K(+). Thr138 is a binding site for ATP. Position 191 (Thr191) interacts with substrate.

This sequence belongs to the type III pantothenate kinase family. Homodimer. The cofactor is NH4(+). K(+) serves as cofactor.

It is found in the cytoplasm. It carries out the reaction (R)-pantothenate + ATP = (R)-4'-phosphopantothenate + ADP + H(+). Its pathway is cofactor biosynthesis; coenzyme A biosynthesis; CoA from (R)-pantothenate: step 1/5. Functionally, catalyzes the phosphorylation of pantothenate (Pan), the first step in CoA biosynthesis. The sequence is that of Type III pantothenate kinase from Chlorobium chlorochromatii (strain CaD3).